The primary structure comprises 518 residues: Tyrosine/DOPA decarboxylase 1 (518 aa).

Lys321 is modified (N6-(pyridoxal phosphate)lysine).

The protein belongs to the group II decarboxylase family. As to quaternary structure, homodimer. Requires pyridoxal 5'-phosphate as cofactor. Predominantly expressed in the roots.

It carries out the reaction L-tyrosine + H(+) = tyramine + CO2. The catalysed reaction is L-dopa + H(+) = dopamine + CO2. The enzyme catalyses 5-hydroxy-L-tryptophan + H(+) = serotonin + CO2. In terms of biological role, marginally higher substrate specificity for L-DOPA over L-tyrosine. This chain is Tyrosine/DOPA decarboxylase 1 (TYDC1), found in Papaver somniferum (Opium poppy).